The sequence spans 1792 residues: Protein TIC 214 (1792 aa).

6 helical membrane-spanning segments follow: residues 18–38, 64–84, 87–107, 129–149, 165–185, and 221–241; these read IINS…FSIG, FITG…HLAL, PHII…GNNH, IFFH…SSIL, IFLI…MKWI, and IFLV…PPPF.

The protein belongs to the TIC214 family. In terms of assembly, part of the Tic complex.

Its subcellular location is the plastid. It localises to the chloroplast inner membrane. Functionally, involved in protein precursor import into chloroplasts. May be part of an intermediate translocation complex acting as a protein-conducting channel at the inner envelope. This is Protein TIC 214 from Glycine max (Soybean).